The primary structure comprises 88 residues: MKKILIGGIRLYQKYISRFTPATCRFYPTCSAYGIEAIQTHGALKGSYLAIRRISKCHPFHKGGLDFVPPKKEKNADSEHSCKAHHHH.

Residues Asp66 to His88 form a disordered region. Basic and acidic residues predominate over residues Pro69–Cys82.

Belongs to the UPF0161 family.

Its subcellular location is the cell membrane. In terms of biological role, could be involved in insertion of integral membrane proteins into the membrane. This is Putative membrane protein insertion efficiency factor from Listeria monocytogenes serotype 4b (strain CLIP80459).